Reading from the N-terminus, the 771-residue chain is Probable dipeptidyl peptidase 4 (771 aa).

Positions 1–16 (MKYSKLLLLLVSVVQA) are cleaved as a signal peptide. N37, N80, N114, N173, N222, N470, and N495 each carry an N-linked (GlcNAc...) asparagine glycan. Residues S618, D695, and H730 each act as charge relay system in the active site.

It belongs to the peptidase S9B family.

The protein resides in the secreted. It catalyses the reaction Release of an N-terminal dipeptide, Xaa-Yaa-|-Zaa-, from a polypeptide, preferentially when Yaa is Pro, provided Zaa is neither Pro nor hydroxyproline.. Its function is as follows. Extracellular dipeptidyl-peptidase which removes N-terminal dipeptides sequentially from polypeptides having unsubstituted N-termini provided that the penultimate residue is proline. The chain is Probable dipeptidyl peptidase 4 (dpp4) from Aspergillus flavus (strain ATCC 200026 / FGSC A1120 / IAM 13836 / NRRL 3357 / JCM 12722 / SRRC 167).